A 206-amino-acid chain; its full sequence is MELKVTTLEGKEAGSVQLSDEIFGLDPRVDIIQRCVNWQLAKRQAGTHKAKGRAEVWRTGKKMYKQKGTGGARHGSQRVPQFRGGGRAFGPVVRSHAFDLPKKVRALALKHALSAKAKDGGLIVIESATLEAAKTKALVGHFSGLGLTSALIIDGAELNNGFAVAARNIPNIDVLPIQGINVYDILRRQKLVLTKAAVDALEARFK.

The protein belongs to the universal ribosomal protein uL4 family. In terms of assembly, part of the 50S ribosomal subunit.

Functionally, one of the primary rRNA binding proteins, this protein initially binds near the 5'-end of the 23S rRNA. It is important during the early stages of 50S assembly. It makes multiple contacts with different domains of the 23S rRNA in the assembled 50S subunit and ribosome. Forms part of the polypeptide exit tunnel. The sequence is that of Large ribosomal subunit protein uL4 from Rhodopseudomonas palustris (strain BisB18).